A 385-amino-acid chain; its full sequence is Mannitol-1-phosphate 5-dehydrogenase (385 aa).

NAD(+) is bound at residue 3–14; it reads ALQFGAGNIGRG.

The protein belongs to the mannitol dehydrogenase family.

It catalyses the reaction D-mannitol 1-phosphate + NAD(+) = beta-D-fructose 6-phosphate + NADH + H(+). This chain is Mannitol-1-phosphate 5-dehydrogenase, found in Buchnera aphidicola subsp. Acyrthosiphon pisum (strain 5A).